We begin with the raw amino-acid sequence, 441 residues long: MSQLLTARQAEELHKSIIAYLASVNLTESSAALRAELGDSVSIDDATLKKYEGLLEKKWTSVVRLQKKNQDPTSWLPRSPARHILEGHREPVTCVAFHPVFSSLASGSDDTTIKIWDWELGELERTVKGHTKAVLDVDYGGPRGGTLLASCSSDLTIKLWDPSDNYKNIRTLPGHDHSVSSVRFIPSGAAGSPMSGNLLVSASRDKTLRIWDVTTGYCVKTLSGHVDWVRAVAPSLDGRFLFAAGDDRIPRLWDLSSAETKSTFLGHEHVIECVAIAPAASYPHLAVLSGLKKPPPVSSSAEFFATGSRDKTIRLWDSRGNLIKTLVGHDNWVRALAFHPGGKHLLSVADDKTIRCWDLTQECKCVRVISDAHGHFVTCLRWAPPLIKDGGANGESETNGAPAATATTNGVRPDPNAANKISIRCVIATGSVDRKVRIFAT.

A LisH domain is found at 9-41 (QAEELHKSIIAYLASVNLTESSAALRAELGDSV). 8 WD repeats span residues 87–128 (GHRE…RTVK), 130–170 (HTKA…KNIR), 174–221 (GHDH…CVKT), 224–263 (GHVDWVRAVAPSLDGRFLFAAGDDRIPRLWDLSSAETKST), 266–326 (GHEH…IKTL), 328–367 (GHDNWVRALAFHPGGKHLLSVADDKTIRCWDLTQECKCVR), 372–402 (AHGHFVTCLRWAPPLIKDGGANGESETNGAP), and 403–440 (AATATTNGVRPDPNAANKISIRCVIATGSVDRKVRIFA). The interval 390 to 415 (GGANGESETNGAPAATATTNGVRPDP) is disordered. Residues 398–410 (TNGAPAATATTNG) are compositionally biased toward low complexity.

Belongs to the WD repeat LIS1/nudF family. As to quaternary structure, self-associates. Interacts with nudE and dynein.

It localises to the cytoplasm. It is found in the cytoskeleton. The protein resides in the spindle pole. In terms of biological role, positively regulates the activity of the minus-end directed microtubule motor protein dynein. May enhance dynein-mediated microtubule sliding by targeting dynein to the microtubule plus end. Required for nuclear migration during vegetative growth as well as development. Required for retrograde early endosome (EE) transport from the hyphal tip. Required for localization of dynein to the mitotic spindle poles. Recruits additional proteins to the dynein complex at SPBs. This Neosartorya fischeri (strain ATCC 1020 / DSM 3700 / CBS 544.65 / FGSC A1164 / JCM 1740 / NRRL 181 / WB 181) (Aspergillus fischerianus) protein is Nuclear distribution protein nudF.